A 539-amino-acid chain; its full sequence is Lipid scramblase CLPTM1L (539 aa).

Topologically, residues 1 to 10 (MWSGRSSFTS) are cytoplasmic. The helical transmembrane segment at 11 to 31 (LVVGVFLVYVVHTCWVMYGIV) threads the bilayer. Residues 32–285 (YTRPCSGDSN…LKGIFVDTNL (254 aa)) are Extracellular-facing. N-linked (GlcNAc...) asparagine glycosylation is found at Asn-91 and Asn-101. A helical transmembrane segment spans residues 286–306 (YLLALTFFVAAFHLLFDFLAF). Topologically, residues 307-325 (KSDISFWKKKKSMIGMSTK) are cytoplasmic. The helical transmembrane segment at 326–342 (AVLWRCFSTVVIFLFLL) threads the bilayer. Over 343 to 403 (DEQTSLLVLI…TEKYDAQAMK (61 aa)) the chain is Extracellular. Residues 404–424 (YLSYLLYPLCVGGAVYSLLNI) form a helical membrane-spanning segment. The Cytoplasmic segment spans residues 425-429 (KYKSW). A helical transmembrane segment spans residues 430 to 450 (YSWLINSFVNGVYAFGFLFML). Residues 451-539 (PQLFVNYKMK…EQPKRKPHPD (89 aa)) lie on the Extracellular side of the membrane.

It belongs to the CLPTM1 family.

The protein resides in the endoplasmic reticulum membrane. It carries out the reaction a 6-(alpha-D-glucosaminyl)-1-(1,2-diacyl-sn-glycero-3-phospho)-1D-myo-inositol(in) = a 6-(alpha-D-glucosaminyl)-1-(1,2-diacyl-sn-glycero-3-phospho)-1D-myo-inositol(out). The enzyme catalyses 6-(alpha-D-glucosaminyl)-(1-octadecanoyl,2-(9Z)-octadecenoyl-sn-glycero-3-phospho)-1D-myo-inositol(in) = 6-(alpha-D-glucosaminyl)-(1-octadecanoyl,2-(9Z)-octadecenoyl-sn-glycero-3-phospho)-1D-myo-inositol(out). It catalyses the reaction a 1,2-diacyl-sn-glycero-3-phospho-(1D-myo-inositol)(in) = a 1,2-diacyl-sn-glycero-3-phospho-(1D-myo-inositol)(out). The catalysed reaction is a 1,2-diacyl-sn-glycero-3-phosphocholine(in) = a 1,2-diacyl-sn-glycero-3-phosphocholine(out). It carries out the reaction a 1,2-diacyl-sn-glycero-3-phosphoethanolamine(in) = a 1,2-diacyl-sn-glycero-3-phosphoethanolamine(out). Functionally, scramblase that mediates the translocation of glucosaminylphosphatidylinositol (alpha-D-GlcN-(1-6)-(1,2-diacyl-sn-glycero-3-phospho)-1D-myo-inositol, GlcN-PI) across the endoplasmic reticulum (ER) membrane, from the cytosolic leaflet to the luminal leaflet of the ER membrane, where it participates in the biosynthesis of glycosylphosphatidylinositol (GPI). GPI is a lipid glycoconjugate involved in post-translational modification of proteins. Can also translocate 1,2-diacyl-sn-glycero-3-phospho-(1D-myo-inositol) (phosphatidylinositol or PI), as well as several other phospholipids (1,2-diacyl-sn-glycero-3-phosphocholine, 1,2-diacyl-sn-glycero-3-phosphoethanolamine), and N-acetylglucosaminylphosphatidylinositol (GlcNAc-PI) in vitro. This chain is Lipid scramblase CLPTM1L (Clptm1l), found in Mus musculus (Mouse).